A 104-amino-acid polypeptide reads, in one-letter code: Large ribosomal subunit protein uL24 (104 aa).

It belongs to the universal ribosomal protein uL24 family. Part of the 50S ribosomal subunit.

Its function is as follows. One of two assembly initiator proteins, it binds directly to the 5'-end of the 23S rRNA, where it nucleates assembly of the 50S subunit. Functionally, one of the proteins that surrounds the polypeptide exit tunnel on the outside of the subunit. This is Large ribosomal subunit protein uL24 from Pseudomonas fluorescens (strain SBW25).